The chain runs to 888 residues: Bifunctional uridylyltransferase/uridylyl-removing enzyme (888 aa).

Residues 1 to 348 form a uridylyltransferase region; it reads MATTTDKQVS…YHFAEDKIEP (348 aa). Residues 349–709 are uridylyl-removing; the sequence is INPRFRIINN…LQPTTSRGAT (361 aa). The HD domain occupies 468 to 590; sequence VDEHTILVIR…VGTQQRLDYL (123 aa). ACT domains lie at 710–787 and 817–888; these read ELII…DDTM and ELSI…NIEQ.

It belongs to the GlnD family. The cofactor is Mg(2+).

It carries out the reaction [protein-PII]-L-tyrosine + UTP = [protein-PII]-uridylyl-L-tyrosine + diphosphate. The catalysed reaction is [protein-PII]-uridylyl-L-tyrosine + H2O = [protein-PII]-L-tyrosine + UMP + H(+). With respect to regulation, uridylyltransferase (UTase) activity is inhibited by glutamine, while glutamine activates uridylyl-removing (UR) activity. Its function is as follows. Modifies, by uridylylation and deuridylylation, the PII regulatory proteins (GlnB and homologs), in response to the nitrogen status of the cell that GlnD senses through the glutamine level. Under low glutamine levels, catalyzes the conversion of the PII proteins and UTP to PII-UMP and PPi, while under higher glutamine levels, GlnD hydrolyzes PII-UMP to PII and UMP (deuridylylation). Thus, controls uridylylation state and activity of the PII proteins, and plays an important role in the regulation of nitrogen assimilation and metabolism. This is Bifunctional uridylyltransferase/uridylyl-removing enzyme from Hydrogenovibrio crunogenus (strain DSM 25203 / XCL-2) (Thiomicrospira crunogena).